A 146-amino-acid chain; its full sequence is Hemoglobin subunit beta (146 aa).

Val1 carries the N-acetylvaline modification. The 145-residue stretch at 2–146 folds into the Globin domain; it reads HLTPEEKNAV…VANALAHKYH (145 aa). Residue Thr12 is modified to Phosphothreonine. Ser44 bears the Phosphoserine mark. Lys59 is modified (N6-acetyllysine). His63 contributes to the heme b binding site. Lys82 carries the N6-acetyllysine modification. His92 lines the heme b pocket. S-nitrosocysteine is present on Cys93. Residue Lys144 is modified to N6-acetyllysine.

The protein belongs to the globin family. As to quaternary structure, heterotetramer of two alpha chains and two beta chains. Red blood cells.

Its function is as follows. Involved in oxygen transport from the lung to the various peripheral tissues. This Papio cynocephalus (Yellow baboon) protein is Hemoglobin subunit beta (HBB).